The following is a 510-amino-acid chain: Glycerol kinase (510 aa).

Threonine 14 contributes to the ADP binding site. Residues threonine 14 and threonine 15 each coordinate ATP. Threonine 14 contributes to the sn-glycerol 3-phosphate binding site. Arginine 18 is a binding site for ADP. Residues arginine 84, glutamate 85, tyrosine 136, and aspartate 256 each coordinate sn-glycerol 3-phosphate. 5 residues coordinate glycerol: arginine 84, glutamate 85, tyrosine 136, aspartate 256, and glutamine 257. Residues threonine 278, glycine 322, glycine 422, and asparagine 426 each contribute to the ADP site. 3 residues coordinate ATP: threonine 278, glycine 322, and glycine 422.

The protein belongs to the FGGY kinase family.

It catalyses the reaction glycerol + ATP = sn-glycerol 3-phosphate + ADP + H(+). Its pathway is polyol metabolism; glycerol degradation via glycerol kinase pathway; sn-glycerol 3-phosphate from glycerol: step 1/1. In terms of biological role, key enzyme in the regulation of glycerol uptake and metabolism. Catalyzes the phosphorylation of glycerol to yield sn-glycerol 3-phosphate. It also catalyzes the phosphorylation of dihydroxyacetone (DHA). Involved, together with the DHA kinase DhaKLM, in the metabolism of DHA. This Haloferax volcanii (strain ATCC 29605 / DSM 3757 / JCM 8879 / NBRC 14742 / NCIMB 2012 / VKM B-1768 / DS2) (Halobacterium volcanii) protein is Glycerol kinase.